The sequence spans 327 residues: Sugar transporter ERD6-like 9 (327 aa).

The next 8 membrane-spanning stretches (helical) occupy residues 26–46 (FLVFTTFIIVSASFSFGVALG), 68–88 (VFGSLLTFGGMIGALFSATIA), 102–122 (VFCISGWLAIALAKNIIWLDL), 125–145 (FFVGIGVGLLSYVVPVYIAEI), 152–172 (GTFTFSNQLLQNCGVATAYYL), 180–200 (IIALIGILPCLIQLVGLFFVP), 260–280 (LTIGIGLMLLQQLSGSAGLGY), and 295–315 (IGMTVLSIVVVPKAILGLILV).

It belongs to the major facilitator superfamily. Sugar transporter (TC 2.A.1.1) family.

The protein resides in the membrane. Sugar transporter. The polypeptide is Sugar transporter ERD6-like 9 (Arabidopsis thaliana (Mouse-ear cress)).